Reading from the N-terminus, the 74-residue chain is Fulgimotoxin (74 aa).

Gln-1 is subject to Pyrrolidone carboxylic acid. 5 disulfides stabilise this stretch: Cys-10–Cys-34, Cys-13–Cys-21, Cys-27–Cys-51, Cys-55–Cys-66, and Cys-67–Cys-72.

This sequence belongs to the three-finger toxin family. Ancestral subfamily. Boigatoxin sub-subfamily. Monomer. The N-terminus is blocked. In terms of processing, contains 5 disulfide bonds. In terms of tissue distribution, expressed by the venom gland.

The protein resides in the secreted. Its function is as follows. Reptile-specific three-finger toxin that is lethal at low doses for lizards, but not for mice. Probably acts as a neurotoxin. This is Fulgimotoxin from Oxybelis fulgidus (Green vine snake).